A 570-amino-acid polypeptide reads, in one-letter code: Sulfite reductase [NADPH] hemoprotein beta-component (570 aa).

Residues Cys-434, Cys-440, Cys-479, and Cys-483 each coordinate [4Fe-4S] cluster. Residue Cys-483 coordinates siroheme.

This sequence belongs to the nitrite and sulfite reductase 4Fe-4S domain family. Alpha(8)-beta(8). The alpha component is a flavoprotein, the beta component is a hemoprotein. It depends on siroheme as a cofactor. The cofactor is [4Fe-4S] cluster.

It carries out the reaction hydrogen sulfide + 3 NADP(+) + 3 H2O = sulfite + 3 NADPH + 4 H(+). It participates in sulfur metabolism; hydrogen sulfide biosynthesis; hydrogen sulfide from sulfite (NADPH route): step 1/1. Functionally, component of the sulfite reductase complex that catalyzes the 6-electron reduction of sulfite to sulfide. This is one of several activities required for the biosynthesis of L-cysteine from sulfate. In Escherichia coli (strain K12), this protein is Sulfite reductase [NADPH] hemoprotein beta-component (cysI).